We begin with the raw amino-acid sequence, 363 residues long: Pyrimidine monooxygenase RutA (363 aa).

Residues 49-50 (IK), N115, E124, 140-141 (RY), and S190 contribute to the FMN site.

The protein belongs to the NtaA/SnaA/DszA monooxygenase family. RutA subfamily.

The enzyme catalyses uracil + FMNH2 + NADH + O2 = (Z)-3-ureidoacrylate + FMN + NAD(+) + H2O + H(+). The catalysed reaction is thymine + FMNH2 + NADH + O2 = (Z)-2-methylureidoacrylate + FMN + NAD(+) + H2O + H(+). In terms of biological role, catalyzes the pyrimidine ring opening between N-3 and C-4 by an unusual flavin hydroperoxide-catalyzed mechanism, adding oxygen atoms in the process to yield ureidoacrylate peracid, that immediately reacts with FMN forming ureidoacrylate and FMN-N(5)-oxide. The FMN-N(5)-oxide reacts spontaneously with NADH to produce FMN. Requires the flavin reductase RutF to regenerate FMN in vivo. The polypeptide is Pyrimidine monooxygenase RutA (Escherichia coli O44:H18 (strain 042 / EAEC)).